A 466-amino-acid chain; its full sequence is ATP-dependent protease ATPase subunit HslU (466 aa).

ATP-binding positions include Ile18, 60 to 65, Asp279, Glu344, and Arg416; that span reads GVGKTE.

Belongs to the ClpX chaperone family. HslU subfamily. In terms of assembly, a double ring-shaped homohexamer of HslV is capped on each side by a ring-shaped HslU homohexamer. The assembly of the HslU/HslV complex is dependent on binding of ATP.

It localises to the cytoplasm. ATPase subunit of a proteasome-like degradation complex; this subunit has chaperone activity. The binding of ATP and its subsequent hydrolysis by HslU are essential for unfolding of protein substrates subsequently hydrolyzed by HslV. HslU recognizes the N-terminal part of its protein substrates and unfolds these before they are guided to HslV for hydrolysis. The protein is ATP-dependent protease ATPase subunit HslU of Lactobacillus acidophilus (strain ATCC 700396 / NCK56 / N2 / NCFM).